Reading from the N-terminus, the 91-residue chain is Small ribosomal subunit protein uS19 (91 aa).

The protein belongs to the universal ribosomal protein uS19 family.

In terms of biological role, protein S19 forms a complex with S13 that binds strongly to the 16S ribosomal RNA. This Methylibium petroleiphilum (strain ATCC BAA-1232 / LMG 22953 / PM1) protein is Small ribosomal subunit protein uS19.